Reading from the N-terminus, the 288-residue chain is Transmembrane and coiled-coil domain-containing protein 5A (288 aa).

Residues 10 to 192 (KRNIISLNMD…ALFLEREVSK (183 aa)) adopt a coiled-coil conformation. A helical membrane pass occupies residues 224 to 244 (IFCCLFFITLFFIRLLSYMFF).

The protein belongs to the TMCO5 family.

The protein resides in the endoplasmic reticulum membrane. The protein localises to the nucleus membrane. In Homo sapiens (Human), this protein is Transmembrane and coiled-coil domain-containing protein 5A (TMCO5A).